Here is a 482-residue protein sequence, read N- to C-terminus: Glycogen synthase (482 aa).

K20 is an ADP-alpha-D-glucose binding site.

The protein belongs to the glycosyltransferase 1 family. Bacterial/plant glycogen synthase subfamily.

It catalyses the reaction [(1-&gt;4)-alpha-D-glucosyl](n) + ADP-alpha-D-glucose = [(1-&gt;4)-alpha-D-glucosyl](n+1) + ADP + H(+). It participates in glycan biosynthesis; glycogen biosynthesis. Its function is as follows. Synthesizes alpha-1,4-glucan chains using ADP-glucose. This chain is Glycogen synthase, found in Aliivibrio salmonicida (strain LFI1238) (Vibrio salmonicida (strain LFI1238)).